Consider the following 709-residue polypeptide: Solute carrier organic anion transporter family member 2B1 (709 aa).

The disordered stretch occupies residues 1–38 (MGPRIGPAGEVPQVPDKETKATMGTENTPGGKASPDPQ). Residues 1–49 (MGPRIGPAGEVPQVPDKETKATMGTENTPGGKASPDPQDVRPSVFHNIK) are Cytoplasmic-facing. At Ser34 the chain carries Phosphoserine. A helical transmembrane segment spans residues 50 to 69 (LFVLCHSLLQLAQLMISGYL). The tract at residues 51–69 (FVLCHSLLQLAQLMISGYL) is required for E1S and taurocholate transport; required for transporter stability. The Extracellular segment spans residues 70-88 (KSSISTVEKRFGLSSQTSG). Residues 89–109 (LLASFNEVGNTALIVFVSYFG) traverse the membrane as a helical segment. The Cytoplasmic segment spans residues 110 to 115 (SRVHRP). A helical membrane pass occupies residues 116–140 (RMIGYGAILVALAGLLMTLPHFISE). Residues 141–185 (PYRYDNTSPEDMPQDFKASLCLPTTSAPASAPSNGNCSSYTETQH) are Extracellular-facing. The N-linked (GlcNAc...) asparagine glycan is linked to Asn176. Residues 186–215 (LSVVGIMFVAQTLLGVGGVPIQPFGISYID) traverse the membrane as a helical segment. Residues 216–234 (DFAHNSNSPLYLGILFAVT) are Cytoplasmic-facing. The chain crosses the membrane as a helical span at residues 235 to 255 (MMGPGLAFGLGSLMLRLYVDI). Residues 256–273 (NQMPEGGISLTIKDPRWV) are Extracellular-facing. Residues 274 to 298 (GAWWLGFLIAAGAVALAAIPYFFFP) form a helical membrane-spanning segment. The Cytoplasmic segment spans residues 299 to 366 (KEMPKEKREL…IKVFPRVLLQ (68 aa)). At Thr318 the chain carries Phosphothreonine. The segment at 319 to 342 (DSPARKGKDSPSKQSPGESTKKQD) is disordered. Ser320 is modified (phosphoserine). A helical transmembrane segment spans residues 367 to 388 (TLRHPIFLLVVLSQVCLSSMAA). Residues 389–408 (GMATFLPKFLERQFSITASY) are Extracellular-facing. Residues 409-432 (ANLLIGCLSFPSVIVGIVVGGVLV) form a helical membrane-spanning segment. The Cytoplasmic segment spans residues 433–436 (KRLH). A helical membrane pass occupies residues 437 to 460 (LGPVGCGALCLLGMLLCLFFSLPL). The Extracellular segment spans residues 461–564 (FFIGCSSHQI…STCSHLVVPF (104 aa)). Positions 483–543 (LELSPSCMEA…VFYTNCSCVV (61 aa)) constitute a Kazal-like domain. 3 disulfides stabilise this stretch: Cys489-Cys520, Cys495-Cys516, and Cys504-Cys541. N-linked (GlcNAc...) asparagine glycosylation is present at Asn538. The chain crosses the membrane as a helical span at residues 565 to 587 (LLLVSLGSALACLTHTPSFMLIL). Topologically, residues 588-596 (RGVKKEDKT) are cytoplasmic. Residues 597–622 (LAVGIQFMFLRILAWMPSPVIHGSAI) traverse the membrane as a helical segment. The Extracellular portion of the chain corresponds to 623-655 (DTTCVHWALSCGRRAVCRYYNNDLLRNRFIGLQ). The helical transmembrane segment at 656-673 (FFFKTGSVICFALVLAVL) threads the bilayer. Topologically, residues 674 to 709 (RQQDKEARTKESRSSPAVEQQLLVSGPGKKPEDSRV) are cytoplasmic. The disordered stretch occupies residues 679–709 (EARTKESRSSPAVEQQLLVSGPGKKPEDSRV).

The protein belongs to the organo anion transporter (TC 2.A.60) family. In terms of tissue distribution, strongly expressed in the liver, at the sinusoidal membrane of the hepatocytes. Expressed in the kidney. Expressed in placental trophoblasts and syncytiotrophoblast. Expressed in the small intestine. Expressed in the blood-brain barrier, in endothelial cells of brain capillaries. Expressed in the retina, in the inner nuclear layer and the inner plexiform layer. Expressed in skelettal muscles. In testis, primarily localized to the basal membrane of Sertoli cells and weakly expressed within the tubules. Also expressed in pancreas, lung, heart, colon, ovary and spleen. Expressed in fetal brain, heart, kidney, liver, lung, skeletal muscle, spleen and pancreas. As to expression, highest expression in brain. Predominant isoform compared to isoform 3 in small intestine duodenum, kidney, placenta, and skeletal muscle. Predominant isoform compared to isoform 1 in liver. Also expressed in small intestine duodenum, kidney, brain, placenta, and skeletal muscle.

It is found in the cell membrane. Its subcellular location is the basal cell membrane. It localises to the basolateral cell membrane. The protein localises to the apical cell membrane. It catalyses the reaction dehydroepiandrosterone 3-sulfate(out) = dehydroepiandrosterone 3-sulfate(in). The catalysed reaction is estrone 3-sulfate(out) = estrone 3-sulfate(in). It carries out the reaction estrone 3-sulfate(out) + hydrogencarbonate(in) = estrone 3-sulfate(in) + hydrogencarbonate(out). The enzyme catalyses taurocholate(out) = taurocholate(in). It catalyses the reaction coproporphyrin III(out) = coproporphyrin III(in). The catalysed reaction is substance P(out) = substance P(in). It carries out the reaction pregnenolone sulfate(out) = pregnenolone sulfate(in). The enzyme catalyses prostaglandin E2(out) = prostaglandin E2(in). It catalyses the reaction prostaglandin D2(out) = prostaglandin D2(in). The catalysed reaction is L-thyroxine(out) = L-thyroxine(in). E1S, DHEA-S and PregS transports are regulated by steroid hormones. In the case of testosterone, transport of E1S and DHEA-S was inhibited, whereas progesterone stimulated E1S, DHEA-S and PregS uptake. Progesterone stimulates high-affinity uptake of E1S whereas it inhibits low-affinity uptake of E1S. Progesterone doesn't affect the uptake of PGE2. In terms of biological role, mediates the Na(+)-independent transport of steroid sulfate conjugates and other specific organic anions. Responsible for the transport of estrone 3-sulfate (E1S) through the basal membrane of syncytiotrophoblast, highlighting a potential role in the placental absorption of fetal-derived sulfated steroids including the steroid hormone precursor dehydroepiandrosterone sulfate (DHEA-S). Also facilitates the uptake of sulfated steroids at the basal/sinusoidal membrane of hepatocytes, therefore accounting for the major part of organic anions clearance of liver. Mediates the intestinal uptake of sulfated steroids. Mediates the uptake of the neurosteroids DHEA-S and pregnenolone sulfate (PregS) into the endothelial cells of the blood-brain barrier as the first step to enter the brain. Also plays a role in the reuptake of neuropeptides such as substance P/TAC1 and vasoactive intestinal peptide/VIP released from retinal neurons. May act as a heme transporter that promotes cellular iron availability via heme oxygenase/HMOX2 and independently of TFRC. Also transports heme by-product coproporphyrin III (CPIII), and may be involved in their hepatic disposition. Mediates the uptake of other substrates such as prostaglandins D2 (PGD2), E1 (PGE1) and E2 (PGE2), taurocholate, L-thyroxine, leukotriene C4 and thromboxane B2. May contribute to regulate the transport of organic compounds in testis across the blood-testis-barrier. Shows a pH-sensitive substrate specificity which may be ascribed to the protonation state of the binding site and leads to a stimulation of substrate transport in an acidic microenvironment. The exact transport mechanism has not been yet deciphered but most likely involves an anion exchange, coupling the cellular uptake of organic substrate with the efflux of an anionic compound. Hydrogencarbonate/HCO3(-) acts as a probable counteranion that exchanges for organic anions. Cytoplasmic glutamate may also act as counteranion in the placenta. An inwardly directed proton gradient has also been proposed as the driving force of E1S uptake with a (H(+):E1S) stoichiometry of (1:1). Functionally, has estrone 3-sulfate (E1S) transport activity comparable with the full-length isoform 1. The polypeptide is Solute carrier organic anion transporter family member 2B1 (Homo sapiens (Human)).